Consider the following 422-residue polypeptide: COUP transcription factor 1 (422 aa).

Residues M1–Q80 are disordered. The span at E39 to Q66 shows a compositional bias: low complexity. The segment at residues H82–R157 is a DNA-binding region (nuclear receptor). 2 NR C4-type zinc fingers span residues C85–C105 and C121–C145. One can recognise an NR LBD domain in the interval Y183–G409. The segment at L343–S422 is important for dimerization.

It belongs to the nuclear hormone receptor family. NR2 subfamily. As to quaternary structure, binds DNA as dimer; homodimer and probable heterodimer with NR2F6. Interacts with GTF2B; this interaction is direct. Interacts with COPS2.

It is found in the nucleus. Functionally, coup (chicken ovalbumin upstream promoter) transcription factor binds to the ovalbumin promoter and, in conjunction with another protein (S300-II) stimulates initiation of transcription. Binds to both direct repeats and palindromes of the 5'-AGGTCA-3' motif. Represses transcriptional activity of LHCG. In Mus musculus (Mouse), this protein is COUP transcription factor 1 (Nr2f1).